Consider the following 170-residue polypeptide: Cyclic pyranopterin monophosphate synthase (170 aa).

Residues 75 to 77 and 115 to 116 contribute to the substrate site; these read MCH and ME. Asp130 is an active-site residue.

It belongs to the MoaC family. Homohexamer; trimer of dimers.

It carries out the reaction (8S)-3',8-cyclo-7,8-dihydroguanosine 5'-triphosphate = cyclic pyranopterin phosphate + diphosphate. Its pathway is cofactor biosynthesis; molybdopterin biosynthesis. In terms of biological role, catalyzes the conversion of (8S)-3',8-cyclo-7,8-dihydroguanosine 5'-triphosphate to cyclic pyranopterin monophosphate (cPMP). The protein is Cyclic pyranopterin monophosphate synthase of Bacillus velezensis (strain DSM 23117 / BGSC 10A6 / LMG 26770 / FZB42) (Bacillus amyloliquefaciens subsp. plantarum).